The sequence spans 100 residues: UPF0213 protein YhbQ (100 aa).

In terms of domain architecture, GIY-YIG spans 2-77 (TPWYLYLIRT…KQLTKRQKER (76 aa)).

Belongs to the UPF0213 family.

This chain is UPF0213 protein YhbQ, found in Salmonella arizonae (strain ATCC BAA-731 / CDC346-86 / RSK2980).